A 219-amino-acid chain; its full sequence is MAEWIAGGLEGPAGRGLDERVVRSGTTTVGLIASDHVILAADKRATAGFLIASRRVKKIVMLSNYVAMTVSGLVADAQILSDVLREEIRLYEMTNKVKPSVRFVASLLSNILFSSKFFPYIVQLIVGGYDTQPRLYTLDLFGSITEDKYTATGSGSPIAYGVLEERYREDLSVEEAIKVATTAIRSAVLRDAASGDGADVVVIGPQGYEEKFIPYNSLV.

Residues 1-25 constitute a propeptide, removed in mature form; by autocatalysis; sequence MAEWIAGGLEGPAGRGLDERVVRSG. The active-site Nucleophile is threonine 26.

This sequence belongs to the peptidase T1B family. In terms of assembly, the 20S proteasome core is composed of 14 alpha and 14 beta subunits that assemble into four stacked heptameric rings, resulting in a barrel-shaped structure. The two inner rings, each composed of seven catalytic beta subunits, are sandwiched by two outer rings, each composed of seven alpha subunits. The catalytic chamber with the active sites is on the inside of the barrel. Has a gated structure, the ends of the cylinder being occluded by the N-termini of the alpha-subunits. Is capped at one or both ends by the proteasome regulatory ATPase, PAN.

The protein localises to the cytoplasm. The enzyme catalyses Cleavage of peptide bonds with very broad specificity.. With respect to regulation, the formation of the proteasomal ATPase PAN-20S proteasome complex, via the docking of the C-termini of PAN into the intersubunit pockets in the alpha-rings, triggers opening of the gate for substrate entry. Interconversion between the open-gate and close-gate conformations leads to a dynamic regulation of the 20S proteasome proteolysis activity. Component of the proteasome core, a large protease complex with broad specificity involved in protein degradation. This Aeropyrum pernix (strain ATCC 700893 / DSM 11879 / JCM 9820 / NBRC 100138 / K1) protein is Proteasome subunit beta 2.